The chain runs to 147 residues: Basic phospholipase A2 beta-bungarotoxin A4 chain (147 aa).

Positions 1 to 19 (MNPAHLLVLSAVCVSLLGA) are cleaved as a signal peptide. Positions 20–27 (ANIPPHPL) are excised as a propeptide. 6 disulfide bridges follow: C54–C146, C56–C72, C71–C127, C78–C120, C88–C113, and C106–C118. Residues Y55, G57, and G59 each coordinate Ca(2+). H75 is a catalytic residue. Ca(2+) is bound at residue D76. The active site involves D121.

The protein belongs to the phospholipase A2 family. Group I subfamily. D49 sub-subfamily. Heterodimer; disulfide-linked. The A chain has phospholipase A2 activity and the B chain shows homology with the basic protease inhibitors. Ca(2+) serves as cofactor. As to expression, expressed by the venom gland.

The protein resides in the secreted. The catalysed reaction is a 1,2-diacyl-sn-glycero-3-phosphocholine + H2O = a 1-acyl-sn-glycero-3-phosphocholine + a fatty acid + H(+). Snake venom phospholipase A2 (PLA2) that shows presynaptic neurotoxicity. The A chain has phospholipase activity. PLA2 catalyzes the calcium-dependent hydrolysis of the 2-acyl groups in 3-sn-phosphoglycerides. This chain is Basic phospholipase A2 beta-bungarotoxin A4 chain, found in Bungarus candidus (Malayan krait).